A 431-amino-acid polypeptide reads, in one-letter code: Enolase (431 aa).

Q167 provides a ligand contact to (2R)-2-phosphoglycerate. The active-site Proton donor is E209. Positions 246, 290, and 316 each coordinate Mg(2+). (2R)-2-phosphoglycerate-binding residues include K341, R370, S371, and K392. K341 (proton acceptor) is an active-site residue.

It belongs to the enolase family. In terms of assembly, component of the RNA degradosome, a multiprotein complex involved in RNA processing and mRNA degradation. Mg(2+) serves as cofactor.

The protein localises to the cytoplasm. It localises to the secreted. It is found in the cell surface. The catalysed reaction is (2R)-2-phosphoglycerate = phosphoenolpyruvate + H2O. It participates in carbohydrate degradation; glycolysis; pyruvate from D-glyceraldehyde 3-phosphate: step 4/5. Its function is as follows. Catalyzes the reversible conversion of 2-phosphoglycerate (2-PG) into phosphoenolpyruvate (PEP). It is essential for the degradation of carbohydrates via glycolysis. This chain is Enolase, found in Shigella flexneri serotype 5b (strain 8401).